A 389-amino-acid chain; its full sequence is Trans-2-enoyl-CoA reductase [NADH] (389 aa).

NAD(+) contacts are provided by residues 47–52, 73–74, 110–111, and 138–139; these read GASTGY, FE, DA, and LA. Residue tyrosine 224 participates in substrate binding. The active-site Proton donor is tyrosine 234. NAD(+) is bound by residues lysine 243 and 272–274; that span reads LVT.

It belongs to the TER reductase family. Monomer.

The enzyme catalyses a 2,3-saturated acyl-CoA + NAD(+) = a (2E)-enoyl-CoA + NADH + H(+). It participates in lipid metabolism; fatty acid biosynthesis. Functionally, involved in the fatty acid synthesis (FAS II). Catalyzes the reduction of a carbon-carbon double bond in an enoyl moiety that is covalently linked to a coenzyme A (CoA). The chain is Trans-2-enoyl-CoA reductase [NADH] from Clostridium perfringens (strain ATCC 13124 / DSM 756 / JCM 1290 / NCIMB 6125 / NCTC 8237 / Type A).